A 263-amino-acid polypeptide reads, in one-letter code: Methylesterase 18 (263 aa).

Catalysis depends on S80, which acts as the Acyl-ester intermediate. Catalysis depends on charge relay system residues D212 and H240.

It belongs to the AB hydrolase superfamily. Methylesterase family.

It carries out the reaction methyl (indol-3-yl)acetate + H2O = (indol-3-yl)acetate + methanol + H(+). It participates in plant hormone biosynthesis. In terms of biological role, methylesterase shown to have methyl indole-3-acetic acid (MeIAA) esterase activity in vitro. The protein is Methylesterase 18 of Arabidopsis thaliana (Mouse-ear cress).